The primary structure comprises 148 residues: Transcriptional regulator MraZ (148 aa).

SpoVT-AbrB domains lie at 5–51 (AAAL…PSPA) and 80–123 (ARTE…SEAG).

The protein belongs to the MraZ family. In terms of assembly, forms oligomers.

It is found in the cytoplasm. It localises to the nucleoid. This Dechloromonas aromatica (strain RCB) protein is Transcriptional regulator MraZ.